The following is a 1299-amino-acid chain: DExH-box ATP-dependent RNA helicase DExH6 (1299 aa).

One can recognise an R3H domain in the interval 15–82; the sequence is PTSVEATRIW…QRRLSIFKSR (68 aa). The Helicase ATP-binding domain occupies 197 to 366; that stretch reads TSAVESNQVI…FGGCPVVRVP (170 aa). 210-217 serves as a coordination point for ATP; sequence GETGCGKT. The DEIH box motif lies at 313 to 316; that stretch reads DEIH. A Helicase C-terminal domain is found at 537-711; it reads LIQQLMRKIC…ELCLQVKILD (175 aa). Disordered stretches follow at residues 987-1039 and 1175-1299; these read PTGS…MMSS and IPRQ…AEQK. The span at 992–1006 shows a compositional bias: acidic residues; it reads DSDDSNEEEEDDEEV. The segment covering 1007–1020 has biased composition (low complexity); it reads AANTNEEVAANTNE. Residues 1023–1032 show a composition bias toward basic and acidic residues; that stretch reads MDIHKEESRR. Composition is skewed to polar residues over residues 1176–1193, 1204–1214, and 1239–1251; these read PRQQNYKQRNPKATNNTD, NPTNRINQPEA, and PSDQAYGNKQHNT. Positions 1182–1200 match the Bipartite nuclear localization signal motif; the sequence is KQRNPKATNNTDSGKKKEK. Positions 1267–1283 match the Bipartite nuclear localization signal motif; it reads KKTKTRSGNNSDSGKKK. Residues 1279–1299 are compositionally biased toward basic and acidic residues; sequence SGKKKEQYIPKRQREDKAEQK.

This sequence belongs to the DExH box helicase family. In terms of tissue distribution, specifically expressed in the tapetum and vascular tissues.

The protein localises to the nucleus. The catalysed reaction is ATP + H2O = ADP + phosphate + H(+). In terms of biological role, may function as an ATP-dependent RNA/DNA helicase. This is DExH-box ATP-dependent RNA helicase DExH6 from Arabidopsis thaliana (Mouse-ear cress).